The primary structure comprises 469 residues: 3-isopropylmalate dehydratase large subunit (469 aa).

[4Fe-4S] cluster-binding residues include Cys347, Cys408, and Cys411.

This sequence belongs to the aconitase/IPM isomerase family. LeuC type 1 subfamily. As to quaternary structure, heterodimer of LeuC and LeuD. It depends on [4Fe-4S] cluster as a cofactor.

It carries out the reaction (2R,3S)-3-isopropylmalate = (2S)-2-isopropylmalate. Its pathway is amino-acid biosynthesis; L-leucine biosynthesis; L-leucine from 3-methyl-2-oxobutanoate: step 2/4. Its function is as follows. Catalyzes the isomerization between 2-isopropylmalate and 3-isopropylmalate, via the formation of 2-isopropylmaleate. The protein is 3-isopropylmalate dehydratase large subunit of Haemophilus influenzae (strain PittEE).